The primary structure comprises 217 residues: MAAYRADDEYDYLFKVVLIGDSGVGKSNLLSRFTRNEFSLESKSTIGVEFATRSIHVDDKIVKAQIWDTAGQERYRAITSAYYRGAVGALLVYDVTRHVTFENVERWLKELRDHTDANIVIMFVGNKADLRHLRAVSTEDAKAFAERENTFFMETSALESMNVENAFTEVLSQIYRVVSRKALDIGDDPAALPKGQTINVGSKDDVSAVKKVGCCSN.

20–27 (GDSGVGKS) lines the GTP pocket. The Effector region signature appears at 42-50 (SKSTIGVEF). GTP-binding positions include 68–72 (DTAGQ), 126–129 (NKAD), and 156–157 (SA). S-geranylgeranyl cysteine attachment occurs at residues Cys-214 and Cys-215.

It belongs to the small GTPase superfamily. Rab family.

It localises to the cell membrane. Intracellular vesicle trafficking and protein transport. This is Ras-related protein RABA1f (RABA1F) from Arabidopsis thaliana (Mouse-ear cress).